The primary structure comprises 351 residues: UDP-3-O-acylglucosamine N-acyltransferase (351 aa).

His240 (proton acceptor) is an active-site residue.

The protein belongs to the transferase hexapeptide repeat family. LpxD subfamily. As to quaternary structure, homotrimer.

The catalysed reaction is a UDP-3-O-[(3R)-3-hydroxyacyl]-alpha-D-glucosamine + a (3R)-hydroxyacyl-[ACP] = a UDP-2-N,3-O-bis[(3R)-3-hydroxyacyl]-alpha-D-glucosamine + holo-[ACP] + H(+). The protein operates within bacterial outer membrane biogenesis; LPS lipid A biosynthesis. Functionally, catalyzes the N-acylation of UDP-3-O-acylglucosamine using 3-hydroxyacyl-ACP as the acyl donor. Is involved in the biosynthesis of lipid A, a phosphorylated glycolipid that anchors the lipopolysaccharide to the outer membrane of the cell. This chain is UDP-3-O-acylglucosamine N-acyltransferase, found in Ectopseudomonas mendocina (strain ymp) (Pseudomonas mendocina).